The following is a 788-amino-acid chain: MAQRNGMSPRPPPLGRGRGAGGPSGVGSSPPSSCVPMGATSTAGTGASAAPTATPGHGVHRVEPRGPPGAPPSSGNNSNFWHGPERLLLSQIPVERQALTELEYQAMGAVWRAAFLANSTGRAMRKWSQRDAGTLLPLGRPYGFYARVTPRSQMNGVGATDLRQLSPRDAWIVLVATVVHEVDPAADPTVGDKAGHPEGLCAQDGLYLALGAGFRVFVYDLANNTLILAARDADEWFRHGAGEVVRLYRCNRLGVGTPRATLLPQPALRQTLLRAEEATALGRELRRRWAGTTVALQTPGRRLQPMVLLGAWQELAQYEPFASAPHPASLLTAVRRHLNQRLCCGWLALGAVLPARWLGCAAGPATGTTSPPAASGTETEAAGGDAPCAMAGAVGSAVTIPPQPYGGAGGSAICVPNADAHAVVGADATAAAAAAAAAPTVMVGPTAMAGPAASGTVPRAMLVVVLDELGAVFGYCPLDGHVYPLAAELSHFLRAGVLGALALGRESAPAAEAARRLLPELDREQWERPRWDALHLHPRAALWAREPHGQLAFLLRPGRGEAEVLTLATKHPVICANVEDYLQDARRRADAQALGLDLATVVMEAGGQMIHKKTKKPKGKEDESVMKGKHSRYTRPTEPPLTPQASLGRALRRDDEDWKPSRVPGEDSWYDLDETFWVLGSNRKNDVYQRRWKKTVLRCGLEIDRPMPTVPKGCRPQTFTHEGIQLMGGATQEPLDTGLYAPSHVTSAFVPSVYMPPTVPYPDPAARLCRDMRRVTFSNVATHYHYNA.

Disordered regions lie at residues 1-82 (MAQR…NFWH) and 610-663 (IHKK…PSRV). The segment covering 16–25 (RGRGAGGPSG) has biased composition (gly residues). The segment covering 26-56 (VGSSPPSSCVPMGATSTAGTGASAAPTATPG) has biased composition (low complexity). The RNA-binding stretch occupies residues 74–248 (SGNNSNFWHG…HGAGEVVRLY (175 aa)). The segment covering 651–660 (LRRDDEDWKP) has biased composition (basic and acidic residues). Residues 672-788 (LDETFWVLGS…NVATHYHYNA (117 aa)) are interaction with host EIF2AK2/PKR.

Belongs to the herpesviridae US22 family. In terms of assembly, interacts with host EIF2AK2/PKR; this interaction retains EIF2AK2 to the host nucleus and prevents its activation. Interaction (via N-terminus) with host BECN1; this interaction inhibits host autophagy. Interacts with the viral DNA polymerase accessory subunit UL44. Interacts with host HSPA5.

It localises to the virion. It is found in the host cytoplasm. The protein resides in the host nucleus. Functionally, inhibits the establishment of the antiviral state in the infected cell. Prevents the phosphorylation of the host eukaryotic translation initiation factor eIF-2alpha/EIF2S1 and thus the shutoff of viral and cellular protein synthesis by directly interacting with EIF2AK2/PKR. Prevents stress granule formation in response to eIF-2alpha/EIF2S1 phosphorylation, thereby rescuing viral replication and protein synthesis. Also inhibits host autophagy by interacting with host Beclin-1/BECN1. The protein is Protein TRS1 (TRS1) of Human cytomegalovirus (strain Merlin) (HHV-5).